An 813-amino-acid chain; its full sequence is Polycomb group protein FERTILIZATION-INDEPENDENT SEED 2 (813 aa).

A disordered region spans residues 1-27 (MARKSIRGKEVVMVSDDDDDDDDVDDD). Residues 15-26 (SDDDDDDDDVDD) are compositionally biased toward acidic residues. The C2H2-type zinc finger occupies 134–155 (CPFCLIPCGGHEGLQLHLKSSH). Disordered regions lie at residues 197–216 (SPLT…DDSN), 232–261 (DLPR…SEKI), and 274–648 (ESSE…RKEL). Basic and acidic residues predominate over residues 232–246 (DLPRGTENDSTHVND). An A-1 repeat occupies 243-264 (HVNDDNVSSPPRAHSSEKISDI). A 12 X approximate repeat A region spans residues 243-542 (HVNDDNVSSP…HSSKKNKSTR (300 aa)). A B-1 repeat occupies 265–281 (LTTTQLAIAESSEPKVP). The 7 X approximate repeat B stretch occupies residues 265-640 (LTTTQLAIAE…KAEPSEPKVT (376 aa)). The stretch at 282–304 (HVNDGNVSSPPRAHSSAEKNEST) is one A-2 repeat. Basic and acidic residues-rich tracts occupy residues 296-307 (SSAEKNESTHVN), 319-331 (HSLE…HVNE), and 344-353 (KKNESTHMND). The stretch at 305–327 (HVNDDDDVSSPPRAHSLEKNEST) is one A-3 repeat. An A-4 repeat occupies 328-349 (HVNEDNISSPPKAHSSKKNEST). Residues 350-371 (HMNDEDVSFPPRTRSSKETSDI) form an A-5 repeat. Residues 372-388 (LTTTQPAIVEPSEPKVR) form a B-2 repeat. Residues 388–402 (RRGSRRKQLYAKRYK) show a composition bias toward basic residues. The stretch at 403 to 419 (ARETQPAIAESSEPKVL) is one B-3 repeat. Basic and acidic residues-rich tracts occupy residues 414 to 423 (SEPKVLHVND) and 453 to 462 (SEPKVPHVND). One copy of the A-6 repeat lies at 420 to 441 (HVNDENVSSPPEAHSLEKASDI). A B-4 repeat occupies 442 to 458 (LTTTQPAIAESSEPKVP). Residues 459–481 (HVNDENVSSTPRAHSSKKNKSTR) form an A-7 repeat. Positions 472–481 (HSSKKNKSTR) are enriched in basic residues. One copy of the A-8 repeat lies at 482-502 (KNVDNVPSPPKTRSSKKTSDI). Residues 501-512 (DILTTTQPTIAE) are compositionally biased toward polar residues. Residues 503-519 (LTTTQPTIAESSEPKVR) form a B-5 repeat. Over residues 514–523 (SEPKVRHVND) the composition is skewed to basic and acidic residues. The A-9 repeat unit spans residues 520–542 (HVNDDNVSSTPRAHSSKKNKSTR). An A-10 repeat occupies 543 to 563 (KNDDNIPSPPKTRSSKKTSNI). One copy of the B-6 repeat lies at 564–579 (LTRTQPAIAESEPKVP). A compositionally biased stretch (basic and acidic residues) spans 574–586 (SEPKVPHVNDDKV). The A-11 repeat unit spans residues 580–601 (HVNDDKVSSTPRAHSSKKNKST). Positions 593 to 602 (HSSKKNKSTH) are enriched in basic residues. One copy of the A-12 repeat lies at 602-623 (HKKDDNASLPPKTRSSKKTSDI). One copy of the B-7 repeat lies at 624 to 640 (LATTQPAKAEPSEPKVT). The tract at residues 648-783 (LHAERCEAKR…CAKTFHKCTT (136 aa)) is VEFS-box.

The protein belongs to the VEFS (VRN2-EMF2-FIS2-SU(Z)12) family. Probably indirectly associated with FIE and/or MEA. In plants, PcG complexes are probably composed of a member of the EZ family (CLF or MEA), FIE, and a member of the VEFS family (FIS2, VRN2 or EMF2). In terms of tissue distribution, weakly expressed. Expressed in late siliques.

The protein localises to the nucleus. Functionally, polycomb group (PcG) protein. PcG proteins act by forming multiprotein complexes, which are required to maintain the transcriptionally repressive state of homeotic genes throughout development. PcG proteins are not required to initiate repression, but to maintain it during later stages of development. They probably act via the methylation of histones, rendering chromatin heritably changed in its expressibility. Required to prevent the proliferation of the central cell by repressing unknown target genes before fertilization. Regulates the anteroposterior organization of the endosperm. The chain is Polycomb group protein FERTILIZATION-INDEPENDENT SEED 2 from Arabidopsis thaliana (Mouse-ear cress).